A 177-amino-acid polypeptide reads, in one-letter code: Large ribosomal subunit protein uL6 (177 aa).

This sequence belongs to the universal ribosomal protein uL6 family. Part of the 50S ribosomal subunit.

Its function is as follows. This protein binds to the 23S rRNA, and is important in its secondary structure. It is located near the subunit interface in the base of the L7/L12 stalk, and near the tRNA binding site of the peptidyltransferase center. The protein is Large ribosomal subunit protein uL6 of Neisseria meningitidis serogroup C (strain 053442).